We begin with the raw amino-acid sequence, 283 residues long: S-adenosylmethionine mitochondrial carrier protein homolog (283 aa).

Solcar repeat units lie at residues 11–84 (LKFF…GKQF), 93–178 (DSPY…FKLQ), and 187–275 (STPF…TTRI). Helical transmembrane passes span 14 to 34 (FHALVAGGVAGMVVDIALFPI), 55 to 75 (GIYKGLAPAAAGSAPTAALFF), 99 to 119 (MAAASAAEVLACLIRVPVEIA), 152 to 172 (RGFGSTIMREIPFSLIQFPLW), 190 to 210 (FSVALCGAVAGGISAGLTTPL), and 248 to 268 (FAGFVPRVLWITLGGAFFFGF).

Belongs to the mitochondrial carrier (TC 2.A.29) family.

Its subcellular location is the mitochondrion inner membrane. Mitochondrial solute carriers shuttle metabolites, nucleotides, and cofactors through the mitochondrial inner membrane. May mediate the transport of S-adenosylmethionine (SAM) into the mitochondria. The polypeptide is S-adenosylmethionine mitochondrial carrier protein homolog (Drosophila melanogaster (Fruit fly)).